We begin with the raw amino-acid sequence, 238 residues long: DnaA regulatory inactivator Hda (238 aa).

It belongs to the DnaA family. HdA subfamily. As to quaternary structure, the active form seems to be an ADP-bound monomer. Forms the RIDA complex (regulatory inactivation of DnaA) of ATP-DnaA, ADP-Hda and the DNA-loaded beta sliding clamp (dnaN).

Mediates the interaction of DNA replication initiator protein DnaA with DNA polymerase subunit beta sliding clamp (dnaN). Stimulates hydrolysis of ATP-DnaA to ADP-DnaA, rendering DnaA inactive for reinitiation, a process called regulatory inhibition of DnaA or RIDA. This is DnaA regulatory inactivator Hda from Pectobacterium atrosepticum (strain SCRI 1043 / ATCC BAA-672) (Erwinia carotovora subsp. atroseptica).